A 373-amino-acid polypeptide reads, in one-letter code: 8-amino-7-oxononanoate synthase (373 aa).

Substrate is bound at residue R16. Position 93–94 (93–94 (GF)) interacts with pyridoxal 5'-phosphate. H118 contacts substrate. Pyridoxal 5'-phosphate is bound by residues S165, 190-193 (DEAH), and 222-225 (TFSK). Residue K225 is modified to N6-(pyridoxal phosphate)lysine. Residue T334 coordinates substrate.

It belongs to the class-II pyridoxal-phosphate-dependent aminotransferase family. BioF subfamily. As to quaternary structure, homodimer. It depends on pyridoxal 5'-phosphate as a cofactor.

It catalyses the reaction 6-carboxyhexanoyl-[ACP] + L-alanine + H(+) = (8S)-8-amino-7-oxononanoate + holo-[ACP] + CO2. The protein operates within cofactor biosynthesis; biotin biosynthesis. Functionally, catalyzes the decarboxylative condensation of pimeloyl-[acyl-carrier protein] and L-alanine to produce 8-amino-7-oxononanoate (AON), [acyl-carrier protein], and carbon dioxide. The polypeptide is 8-amino-7-oxononanoate synthase (Helicobacter pylori (strain ATCC 700392 / 26695) (Campylobacter pylori)).